We begin with the raw amino-acid sequence, 261 residues long: Transcription antitermination protein NusB (261 aa).

The disordered stretch occupies residues Ala-168 to Asp-261. Residues Val-217 to Glu-228 are compositionally biased toward polar residues. A compositionally biased stretch (basic and acidic residues) spans Pro-242–Asp-261.

Belongs to the NusB family.

In terms of biological role, involved in transcription antitermination. Required for transcription of ribosomal RNA (rRNA) genes. Binds specifically to the boxA antiterminator sequence of the ribosomal RNA (rrn) operons. In Cutibacterium acnes (strain DSM 16379 / KPA171202) (Propionibacterium acnes), this protein is Transcription antitermination protein NusB.